Consider the following 193-residue polypeptide: Regulator of free ubiquitin chains 1 (193 aa).

Belongs to the RFU1 family.

It localises to the endosome. Its function is as follows. Inhibitor of the DOA4 deubiquitinase involved in the regulation of protein degradation by the proteasome and maintenance of a normal level of free ubiquitin. This Eremothecium gossypii (strain ATCC 10895 / CBS 109.51 / FGSC 9923 / NRRL Y-1056) (Yeast) protein is Regulator of free ubiquitin chains 1 (RFU1).